A 137-amino-acid polypeptide reads, in one-letter code: Small ribosomal subunit protein uS12 (137 aa).

The interval 1–57 is disordered; that stretch reads MPTINQLVRKPRKSKVEKPKSPALNVGYNSHKKVQTNVSSPQKRGVATRVGTMTPRK. D102 is subject to 3-methylthioaspartic acid.

It belongs to the universal ribosomal protein uS12 family. Part of the 30S ribosomal subunit. Contacts proteins S8 and S17. May interact with IF1 in the 30S initiation complex.

In terms of biological role, with S4 and S5 plays an important role in translational accuracy. Interacts with and stabilizes bases of the 16S rRNA that are involved in tRNA selection in the A site and with the mRNA backbone. Located at the interface of the 30S and 50S subunits, it traverses the body of the 30S subunit contacting proteins on the other side and probably holding the rRNA structure together. The combined cluster of proteins S8, S12 and S17 appears to hold together the shoulder and platform of the 30S subunit. The sequence is that of Small ribosomal subunit protein uS12 from Streptococcus pneumoniae (strain Hungary19A-6).